The chain runs to 489 residues: Bifunctional protein HldE (489 aa).

Positions 1 to 328 are ribokinase; that stretch reads METENIHSFD…ELKAQLQDQP (328 aa). An ATP-binding site is contributed by 206-209; sequence NKKE. Residue Asp-276 is part of the active site. Residues 357-489 form a cytidylyltransferase region; sequence LTNGCFDLLH…IIQDIRNGRG (133 aa).

This sequence in the N-terminal section; belongs to the carbohydrate kinase PfkB family. The protein in the C-terminal section; belongs to the cytidylyltransferase family. Homodimer.

The catalysed reaction is D-glycero-beta-D-manno-heptose 7-phosphate + ATP = D-glycero-beta-D-manno-heptose 1,7-bisphosphate + ADP + H(+). It carries out the reaction D-glycero-beta-D-manno-heptose 1-phosphate + ATP + H(+) = ADP-D-glycero-beta-D-manno-heptose + diphosphate. Its pathway is nucleotide-sugar biosynthesis; ADP-L-glycero-beta-D-manno-heptose biosynthesis; ADP-L-glycero-beta-D-manno-heptose from D-glycero-beta-D-manno-heptose 7-phosphate: step 1/4. It functions in the pathway nucleotide-sugar biosynthesis; ADP-L-glycero-beta-D-manno-heptose biosynthesis; ADP-L-glycero-beta-D-manno-heptose from D-glycero-beta-D-manno-heptose 7-phosphate: step 3/4. In terms of biological role, catalyzes the phosphorylation of D-glycero-D-manno-heptose 7-phosphate at the C-1 position to selectively form D-glycero-beta-D-manno-heptose-1,7-bisphosphate. Functionally, catalyzes the ADP transfer from ATP to D-glycero-beta-D-manno-heptose 1-phosphate, yielding ADP-D-glycero-beta-D-manno-heptose. The chain is Bifunctional protein HldE from Desulfatibacillum aliphaticivorans.